We begin with the raw amino-acid sequence, 136 residues long: Large ribosomal subunit protein uL16 (136 aa).

Belongs to the universal ribosomal protein uL16 family. In terms of assembly, part of the 50S ribosomal subunit.

Binds 23S rRNA and is also seen to make contacts with the A and possibly P site tRNAs. The chain is Large ribosomal subunit protein uL16 from Salmonella agona (strain SL483).